The primary structure comprises 76 residues: Adipogenesis regulatory factor (76 aa).

As to expression, expressed in adipose tissue (at protein level). Highly expressed in omental and subcutaneous adipose tissues. Expressed in heart, cornea, liver, kidney and spleen.

Its subcellular location is the nucleus. In terms of biological role, plays a role in fat cell development; promotes adipogenic differentiation and stimulates transcription initiation of master adipogenesis factors like PPARG and CEBPA at early stages of preadipocyte differentiation. Its overexpression confers resistance to the anticancer chemotherapeutic drug cisplatin. The polypeptide is Adipogenesis regulatory factor (ADIRF) (Homo sapiens (Human)).